The chain runs to 189 residues: Methylated-DNA--protein-cysteine methyltransferase (189 aa).

2 residues coordinate DNA: Tyr-128 and Arg-142. The active-site Nucleophile; methyl group acceptor is the Cys-159. Ser-165 provides a ligand contact to DNA.

Belongs to the MGMT family.

It localises to the nucleus. The catalysed reaction is a 6-O-methyl-2'-deoxyguanosine in DNA + L-cysteinyl-[protein] = S-methyl-L-cysteinyl-[protein] + a 2'-deoxyguanosine in DNA. It catalyses the reaction a 4-O-methyl-thymidine in DNA + L-cysteinyl-[protein] = a thymidine in DNA + S-methyl-L-cysteinyl-[protein]. In terms of biological role, involved in the cellular defense against the biological effects of O6-methylguanine (O6-MeG) and O4-methylthymine (O4-MeT) in DNA. Repairs the methylated nucleobase in DNA by stoichiometrically transferring the methyl group to a cysteine residue in the enzyme. This is a suicide reaction: the enzyme is irreversibly inactivated. This Kluyveromyces lactis (strain ATCC 8585 / CBS 2359 / DSM 70799 / NBRC 1267 / NRRL Y-1140 / WM37) (Yeast) protein is Methylated-DNA--protein-cysteine methyltransferase (MGT1).